Consider the following 277-residue polypeptide: Large ribosomal subunit protein uL2c (277 aa).

Disordered stretches follow at residues 36-56 (NKHS…HRGG) and 225-259 (MNSV…GSKS).

Belongs to the universal ribosomal protein uL2 family. Part of the 50S ribosomal subunit.

It is found in the plastid. The protein resides in the chloroplast. This Psilotum nudum (Whisk fern) protein is Large ribosomal subunit protein uL2c (rpl2).